Reading from the N-terminus, the 379-residue chain is Queuine tRNA-ribosyltransferase (379 aa).

Asp-95 (proton acceptor) is an active-site residue. Substrate contacts are provided by residues 95–99, Asp-149, Gln-197, and Gly-224; that span reads DSGGF. The RNA binding stretch occupies residues 255–261; it reads GVGMPAE. Residue Asp-274 is the Nucleophile of the active site. Residues Cys-312, Cys-314, Cys-317, and His-343 each coordinate Zn(2+).

This sequence belongs to the queuine tRNA-ribosyltransferase family. As to quaternary structure, homodimer. Within each dimer, one monomer is responsible for RNA recognition and catalysis, while the other monomer binds to the replacement base PreQ1. Zn(2+) is required as a cofactor.

The enzyme catalyses 7-aminomethyl-7-carbaguanine + guanosine(34) in tRNA = 7-aminomethyl-7-carbaguanosine(34) in tRNA + guanine. Its pathway is tRNA modification; tRNA-queuosine biosynthesis. Its function is as follows. Catalyzes the base-exchange of a guanine (G) residue with the queuine precursor 7-aminomethyl-7-deazaguanine (PreQ1) at position 34 (anticodon wobble position) in tRNAs with GU(N) anticodons (tRNA-Asp, -Asn, -His and -Tyr). Catalysis occurs through a double-displacement mechanism. The nucleophile active site attacks the C1' of nucleotide 34 to detach the guanine base from the RNA, forming a covalent enzyme-RNA intermediate. The proton acceptor active site deprotonates the incoming PreQ1, allowing a nucleophilic attack on the C1' of the ribose to form the product. After dissociation, two additional enzymatic reactions on the tRNA convert PreQ1 to queuine (Q), resulting in the hypermodified nucleoside queuosine (7-(((4,5-cis-dihydroxy-2-cyclopenten-1-yl)amino)methyl)-7-deazaguanosine). In Solibacter usitatus (strain Ellin6076), this protein is Queuine tRNA-ribosyltransferase.